Reading from the N-terminus, the 156-residue chain is Translation initiation factor IF-1, chloroplastic (156 aa).

The transit peptide at 1 to 81 directs the protein to the chloroplast; that stretch reads MASLSWWNPA…RRTTSIQCLS (81 aa). Residues 51 to 79 form a disordered region; the sequence is KSLLVKTQQQSKKKKNNSTNSRRTTSIQC. The span at 67–76 shows a compositional bias: low complexity; it reads NSTNSRRTTS. The region spanning 82–151 is the S1-like domain; that stretch reads QEQKWTHEGS…SKGRIIYRLR (70 aa).

It belongs to the IF-1 family. As to quaternary structure, component of the 30S ribosomal translation pre-initiation complex which assembles on the 30S ribosome in the order IF-2 and IF-3, IF-1 and N-formylmethionyl-tRNA(fMet); mRNA recruitment can occur at any time during PIC assembly.

Its subcellular location is the plastid. It is found in the chloroplast. One of the essential components for the initiation of protein synthesis. Stabilizes the binding of IF-2 and IF-3 on the 30S subunit to which N-formylmethionyl-tRNA(fMet) subsequently binds. Helps modulate mRNA selection, yielding the 30S pre-initiation complex (PIC). Upon addition of the 50S ribosomal subunit IF-1, IF-2 and IF-3 are released leaving the mature 70S translation initiation complex. This chain is Translation initiation factor IF-1, chloroplastic (infA), found in Solanum lycopersicum (Tomato).